Here is a 223-residue protein sequence, read N- to C-terminus: Retbindin (223 aa).

Residues 1 to 30 form the signal peptide; that stretch reads MANRGHTQPRALAWALGLTLVWILLGACGG. 4 cysteine pairs are disulfide-bonded: Cys73–Cys143, Cys80–Cys120, Cys113–Cys157, and Cys126–Cys139.

It belongs to the folate receptor family. In terms of processing, not N-glycosylated.

The protein localises to the secreted. Its subcellular location is the extracellular space. The protein resides in the extracellular matrix. It localises to the interphotoreceptor matrix. It is found in the cell membrane. Its function is as follows. Riboflavin-binding protein which might have a role in retinal flavin transport. The sequence is that of Retbindin (RTBDN) from Canis lupus familiaris (Dog).